The following is a 278-amino-acid chain: Urease accessory protein UreD (278 aa).

Belongs to the UreD family. As to quaternary structure, ureD, UreF and UreG form a complex that acts as a GTP-hydrolysis-dependent molecular chaperone, activating the urease apoprotein by helping to assemble the nickel containing metallocenter of UreC. The UreE protein probably delivers the nickel.

It is found in the cytoplasm. Functionally, required for maturation of urease via the functional incorporation of the urease nickel metallocenter. The polypeptide is Urease accessory protein UreD (Leptothrix cholodnii (strain ATCC 51168 / LMG 8142 / SP-6) (Leptothrix discophora (strain SP-6))).